A 283-amino-acid polypeptide reads, in one-letter code: Thymidylate synthase (283 aa).

DUMP is bound at residue R22. Catalysis depends on C160, which acts as the Nucleophile. Residues 180-183 (RSCD), N191, and 221-223 (HIY) each bind dUMP. D183 provides a ligand contact to (6R)-5,10-methylene-5,6,7,8-tetrahydrofolate. Position 282 (S282) interacts with (6R)-5,10-methylene-5,6,7,8-tetrahydrofolate.

It belongs to the thymidylate synthase family. Bacterial-type ThyA subfamily. Homodimer.

It localises to the cytoplasm. It catalyses the reaction dUMP + (6R)-5,10-methylene-5,6,7,8-tetrahydrofolate = 7,8-dihydrofolate + dTMP. It participates in pyrimidine metabolism; dTTP biosynthesis. Catalyzes the reductive methylation of 2'-deoxyuridine-5'-monophosphate (dUMP) to 2'-deoxythymidine-5'-monophosphate (dTMP) while utilizing 5,10-methylenetetrahydrofolate (mTHF) as the methyl donor and reductant in the reaction, yielding dihydrofolate (DHF) as a by-product. This enzymatic reaction provides an intracellular de novo source of dTMP, an essential precursor for DNA biosynthesis. This Shewanella piezotolerans (strain WP3 / JCM 13877) protein is Thymidylate synthase.